Reading from the N-terminus, the 439-residue chain is Serine/threonine-protein kinase 2 (439 aa).

The Protein kinase domain maps to 87-439 (NDDFYHISTG…IFSDWINGRN (353 aa)). Residues 93–101 (ISTGGYGIV) and Lys-117 each bind ATP. The active-site Proton acceptor is Asp-307.

This sequence belongs to the protein kinase superfamily. Ser/Thr protein kinase family. Phosphorylated in vivo. Autophosphorylated in vitro.

The protein resides in the host endoplasmic reticulum. Its subcellular location is the host endoplasmic reticulum-Golgi intermediate compartment. The catalysed reaction is L-seryl-[protein] + ATP = O-phospho-L-seryl-[protein] + ADP + H(+). It catalyses the reaction L-threonyl-[protein] + ATP = O-phospho-L-threonyl-[protein] + ADP + H(+). Its function is as follows. Essential serine-protein kinase involved in the early stage of virion morphogenesis. The chain is Serine/threonine-protein kinase 2 (OPG054) from Monkeypox virus.